Consider the following 273-residue polypeptide: Major prion protein homolog (273 aa).

The signal sequence occupies residues Met1 to Ser24. Positions Lys25–Asn121 are disordered. 8 tandem repeats follow at residues Arg42–Pro47, Arg48–Pro53, His54–Pro59, His60–Pro65, His66–Pro71, His72–Pro77, His78–Pro83, and Gln84–Pro89. The segment at Arg42–Pro89 is 8 X 6 AA tandem repeats of [HR]-[NQ]-P-G-Y-P. The span at Gly51–Tyr94 shows a compositional bias: low complexity. Cu(2+) contacts are provided by His66, His72, and His78. The Cu(2+) site is built by His90 and Gly93. Residues Tyr101–Asn111 show a composition bias toward polar residues. Residues Cys192 and Cys237 are joined by a disulfide bond. Asn194, Asn209, and Asn218 each carry an N-linked (GlcNAc...) asparagine glycan. Residue Ser248 is the site of GPI-anchor amidated serine attachment. A propeptide spans Gly249–His273 (removed in mature form).

The protein belongs to the prion family. Monomer and homodimer. Has a tendency to aggregate into amyloid fibrils containing a cross-beta spine, formed by a steric zipper of superposed beta-strands. Soluble oligomers may represent an intermediate stage on the path to fibril formation. Copper binding may promote oligomerization. As to expression, spinal cord and brain.

The protein localises to the cell membrane. Functionally, its primary physiological function is unclear. Has cytoprotective activity against internal or environmental stresses. May play a role in neuronal development and synaptic plasticity. May be required for neuronal myelin sheath maintenance. May play a role in iron uptake and iron homeostasis. Soluble oligomers are toxic to cultured neuroblastoma cells and induce apoptosis (in vitro). Association with GPC1 (via its heparan sulfate chains) targets PRNP to lipid rafts. Also provides Cu(2+) or Zn(2+) for the ascorbate-mediated GPC1 deaminase degradation of its heparan sulfate side chains. The protein is Major prion protein homolog (PRNP) of Gallus gallus (Chicken).